Consider the following 825-residue polypeptide: Zygotic DNA replication licensing factor mcm6-B (825 aa).

The C4-type zinc-finger motif lies at Cys159–Cys186. An MCM domain is found at Leu347–Val554. Gly397 to Ser404 serves as a coordination point for ATP. The Arginine finger motif lies at Ser529 to Asp532. Over residues Asp668–Gln679 the composition is skewed to acidic residues. Residues Asp668–Asn690 are disordered.

It belongs to the MCM family. As to quaternary structure, component of the mcm2-7 complex (RLF-M). The complex forms a toroidal hexameric ring with the proposed subunit order mcm2-mcm6-mcm4-mcm7-mcm3-mcm5 (By simililarity). Begins to associate with zmcm3, mcm4 and mcm7 into mcm complexes at the neurula stage.

It localises to the nucleus. It catalyses the reaction ATP + H2O = ADP + phosphate + H(+). Functionally, acts as a component of the mcm2-7 complex (mcm complex) which is the putative replicative helicase essential for 'once per cell cycle' DNA replication initiation and elongation in eukaryotic cells. The active ATPase sites in the mcm2-7 ring are formed through the interaction surfaces of two neighboring subunits such that a critical structure of a conserved arginine finger motif is provided in trans relative to the ATP-binding site of the Walker A box of the adjacent subunit. The six ATPase active sites, however, are likely to contribute differentially to the complex helicase activity. The existence of maternal and zygotic forms of mcm3 and mcm6 suggests that specific forms of mcm2-7 complexes may be used during different stages of development. May replace mmcm6 in the mcm2-7 complex. The sequence is that of Zygotic DNA replication licensing factor mcm6-B (zmcm6-b) from Xenopus laevis (African clawed frog).